Reading from the N-terminus, the 747-residue chain is Pyrin (747 aa).

The 92-residue stretch at 1–92 (MANTRVDHLL…AEELHKATGP (92 aa)) folds into the Pyrin domain. The segment at 89–181 (ATGPEHLTEE…GARSAAPLYR (93 aa)) is disordered. Acidic residues predominate over residues 122–135 (PGEDEAQQNDDESD). The Zn(2+) site is built by Cys-442, His-445, Cys-465, and His-471. The B box-type zinc finger occupies 442 to 479 (CPRHMKQVQLLFCEDHREPICLICRLSQEHQGHRVRPI). A coiled-coil region spans residues 479–508 (IEEAALQYKEQIRKQLERLREMRGYVEEHK). The required for homotrimerization and induction of pyroptosomes stretch occupies residues 487-645 (KEQIRKQLER…RFSEMLGSEM (159 aa)). Residues 698 to 720 (EPQDYLHPSSAQDTPELHEIHSQ) form a disordered region.

As to quaternary structure, homotrimer. Interacts (via the B box-type zinc finger) with PSTPIP1. Interacts (via the B30.2/SPRY domain) with several components of the inflammasome complex, including CASP1 p20 and p10 subunits, CASP5, PYCARD, NLRP1, NLRP2 and NLRP3, as well as with unprocessed IL1B; this interaction may lead to autophagic degradation of these proteins. Component of the AIM2 PANoptosome complex, a multiprotein complex that drives inflammatory cell death (PANoptosis). Interacts with NFKBIA and RELA. Interacts weakly with VASP and ACTR3. Interacts with active ULK1 (phosphorylated on 'Ser-317') and BECN1 simultaneously. Also interacts with ATG16L1 (via WD repeats), and with ATG8 family members, including GABARAP, GABARAPL1 and, to a lesser extent, GABARAPL2, MAP1LC3A/LC3A and MAP1LC3C/LC3C. Interacts with TRIM21. Interacts with YWHAB, YWHAE, YWHAG, YWHAH, YWHAQ and YWHAZ; the interaction is required for the down-regulation of pyrin pro-inflammatory activity. Post-translationally, degraded along with the delivery of its substrates to autolysosomal compartments (at protein level). Expressed in spleen and, to a lesser degree in the lung. Not expressed in thymus, testis, ovary, heart, brain, liver, kidney and muscle.

It localises to the cytoplasm. Its subcellular location is the cytoskeleton. It is found in the cell projection. The protein localises to the ruffle. The protein resides in the lamellipodium. It localises to the cytoplasmic vesicle. Its subcellular location is the autophagosome. It is found in the nucleus. Its function is as follows. Involved in the regulation of innate immunity and the inflammatory response in response to IFNG/IFN-gamma. Organizes autophagic machinery by serving as a platform for the assembly of ULK1, Beclin 1/BECN1, ATG16L1, and ATG8 family members and recognizes specific autophagy targets, thus coordinating target recognition with assembly of the autophagic apparatus and initiation of autophagy. Acts as an autophagy receptor for the degradation of several inflammasome components, including CASP1, NLRP1 and NLRP3, hence preventing excessive IL1B- and IL18-mediated inflammation. However, it can also have a positive effect in the inflammatory pathway, acting as an innate immune sensor that triggers PYCARD/ASC specks formation, caspase-1 activation, and IL1B and IL18 production. Together with AIM2, also acts as a mediator of pyroptosis, necroptosis and apoptosis (PANoptosis), an integral part of host defense against pathogens, in response to bacterial infection. It is required for PSTPIP1-induced PYCARD/ASC oligomerization and inflammasome formation. Recruits PSTPIP1 to inflammasomes, and is required for PSTPIP1 oligomerization. The chain is Pyrin from Rattus norvegicus (Rat).